The sequence spans 217 residues: MQCLRALLSFFTIIPAGVAKLDFKCAWALPYVVPPLVAGPAAAALWLGASPHVAYLLLLLMTGLNHLDGLADVADALMVRDRERARAVLEDPRRGTGGIFAVVATYAVATASTASPLQLLLAEVFSKALIVTVAAFSKPFKPGLGALFIDGARSTWPLALPALAVIICLRPAATLAALAVALALYAVAYQHLGGANGDVFGYLLEVSRVAYIVTWHM.

A run of 5 helical transmembrane segments spans residues 6–26, 39–61, 95–115, 116–136, and 162–182; these read ALLS…FKCA, GPAA…LLLM, GTGG…STAS, PLQL…VAAF, and ALAV…AVAL.

This sequence belongs to the CobS family. Mg(2+) is required as a cofactor.

The protein resides in the cell membrane. The enzyme catalyses alpha-ribazole + adenosylcob(III)inamide-GDP = adenosylcob(III)alamin + GMP + H(+). It catalyses the reaction alpha-ribazole 5'-phosphate + adenosylcob(III)inamide-GDP = adenosylcob(III)alamin 5'-phosphate + GMP + H(+). It functions in the pathway cofactor biosynthesis; adenosylcobalamin biosynthesis; adenosylcobalamin from cob(II)yrinate a,c-diamide: step 7/7. In terms of biological role, joins adenosylcobinamide-GDP and alpha-ribazole to generate adenosylcobalamin (Ado-cobalamin). Also synthesizes adenosylcobalamin 5'-phosphate from adenosylcobinamide-GDP and alpha-ribazole 5'-phosphate. The protein is Adenosylcobinamide-GDP ribazoletransferase of Pyrobaculum calidifontis (strain DSM 21063 / JCM 11548 / VA1).